The chain runs to 264 residues: ATP synthase subunit a (264 aa).

The next 6 membrane-spanning stretches (helical) occupy residues 29-49 (TWHI…LWLF), 90-110 (IAPL…MDMI), 134-154 (DLNI…YYSI), 177-197 (IPVN…SLAL), 208-228 (LIFI…ALGV), and 235-255 (LIFH…LTIV).

Belongs to the ATPase A chain family. F-type ATPases have 2 components, CF(1) - the catalytic core - and CF(0) - the membrane proton channel. CF(1) has five subunits: alpha(3), beta(3), gamma(1), delta(1), epsilon(1). CF(0) has three main subunits: a(1), b(2) and c(9-12). The alpha and beta chains form an alternating ring which encloses part of the gamma chain. CF(1) is attached to CF(0) by a central stalk formed by the gamma and epsilon chains, while a peripheral stalk is formed by the delta and b chains.

The protein resides in the cell inner membrane. Its function is as follows. Key component of the proton channel; it plays a direct role in the translocation of protons across the membrane. The chain is ATP synthase subunit a from Shewanella loihica (strain ATCC BAA-1088 / PV-4).